Reading from the N-terminus, the 470-residue chain is Glutamate--tRNA ligase 2 (470 aa).

The 'HIGH' region motif lies at 10–20 (PSPTGFLHIGS). A 'KMSKS' region motif is present at residues 239–243 (KLSKR). Lys-242 lines the ATP pocket.

Belongs to the class-I aminoacyl-tRNA synthetase family. Glutamate--tRNA ligase type 1 subfamily. As to quaternary structure, monomer.

The protein resides in the cytoplasm. The enzyme catalyses tRNA(Glu) + L-glutamate + ATP = L-glutamyl-tRNA(Glu) + AMP + diphosphate. In terms of biological role, catalyzes the attachment of glutamate to tRNA(Glu) in a two-step reaction: glutamate is first activated by ATP to form Glu-AMP and then transferred to the acceptor end of tRNA(Glu). The protein is Glutamate--tRNA ligase 2 of Rickettsia prowazekii (strain Madrid E).